The primary structure comprises 254 residues: Phosphoribosylaminoimidazole-succinocarboxamide synthase (254 aa).

The protein belongs to the SAICAR synthetase family.

The catalysed reaction is 5-amino-1-(5-phospho-D-ribosyl)imidazole-4-carboxylate + L-aspartate + ATP = (2S)-2-[5-amino-1-(5-phospho-beta-D-ribosyl)imidazole-4-carboxamido]succinate + ADP + phosphate + 2 H(+). It functions in the pathway purine metabolism; IMP biosynthesis via de novo pathway; 5-amino-1-(5-phospho-D-ribosyl)imidazole-4-carboxamide from 5-amino-1-(5-phospho-D-ribosyl)imidazole-4-carboxylate: step 1/2. The protein is Phosphoribosylaminoimidazole-succinocarboxamide synthase of Gluconobacter oxydans (strain 621H) (Gluconobacter suboxydans).